The following is an 88-amino-acid chain: Large ribosomal subunit protein bL27 (88 aa).

Residues M1–L21 form a disordered region.

It belongs to the bacterial ribosomal protein bL27 family.

The protein is Large ribosomal subunit protein bL27 of Helicobacter pylori (strain P12).